The sequence spans 343 residues: Methylthioribose-1-phosphate isomerase (343 aa).

Substrate-binding positions include arginine 48–alanine 50, arginine 88, and glutamine 193. Aspartate 234 acts as the Proton donor in catalysis. Asparagine 244–lysine 245 serves as a coordination point for substrate.

The protein belongs to the eIF-2B alpha/beta/delta subunits family. MtnA subfamily.

It catalyses the reaction 5-(methylsulfanyl)-alpha-D-ribose 1-phosphate = 5-(methylsulfanyl)-D-ribulose 1-phosphate. The protein operates within amino-acid biosynthesis; L-methionine biosynthesis via salvage pathway; L-methionine from S-methyl-5-thio-alpha-D-ribose 1-phosphate: step 1/6. Its function is as follows. Catalyzes the interconversion of methylthioribose-1-phosphate (MTR-1-P) into methylthioribulose-1-phosphate (MTRu-1-P). The chain is Methylthioribose-1-phosphate isomerase from Thermotoga neapolitana (strain ATCC 49049 / DSM 4359 / NBRC 107923 / NS-E).